A 2345-amino-acid chain; its full sequence is Acetyl-CoA carboxylase 1 (2345 aa).

At Met1 the chain carries N-acetylmethionine. Ser5, Ser23, Ser25, Ser29, Ser34, Ser47, Ser49, and Ser52 each carry phosphoserine. Thr57 carries the post-translational modification Phosphothreonine. Residues Ser77 and Ser79 each carry the phosphoserine modification. Ser79 is subject to Phosphoserine; by AMPK. The Biotin carboxylation domain occupies 116-617 (VIEKVLIANN…DTGWLDRLIA (502 aa)). Residues 274–465 (SKRILNVPQD…LPAAQLQIAM (192 aa)) form the ATP-grasp domain. An ATP-binding site is contributed by 300–357 (AEEVGYPVMIKASEGGGGKGIRKVNNADDFPNLFRQVQAEVPGSPIFVMRLAKQSRHL). Positions 423, 436, and 438 each coordinate Mg(2+). Positions 423, 436, and 438 each coordinate Mn(2+). Residue Arg440 is part of the active site. Residue Thr609 is modified to Phosphothreonine. In terms of domain architecture, Biotinyl-binding spans 744-818 (FEKENDPSVM…DPGCVIAKMQ (75 aa)). At Lys785 the chain carries N6-biotinyllysine. Ser834, Ser1200, Ser1215, and Ser1217 each carry phosphoserine. At Thr1226 the chain carries Phosphothreonine. Phosphoserine is present on residues Ser1258, Ser1262, and Ser1272. N6-acetyllysine is present on Lys1333. The CoA carboxyltransferase N-terminal domain occupies 1575 to 1913 (PYVTKDLLQS…SVHSSVPLLN (339 aa)). Residues 1575–2233 (PYVTKDLLQS…EDLVKKKIHN (659 aa)) form a carboxyltransferase region. CoA is bound by residues Arg1822, Lys2126, and Arg2128. Positions 1917 to 2233 (PIDRIIEFVP…EDLVKKKIHN (317 aa)) constitute a CoA carboxyltransferase C-terminal domain. Residue Thr2152 is modified to Phosphothreonine.

In terms of assembly, monomer, homodimer, and homotetramer. Can form filamentous polymers. Interacts in its inactive phosphorylated form with the BRCT domains of BRCA1 which prevents ACACA dephosphorylation and inhibits lipid synthesis. Interacts with MID1IP1; interaction with MID1IP1 promotes oligomerization and increases its activity. Mg(2+) serves as cofactor. It depends on Mn(2+) as a cofactor. The cofactor is biotin. In terms of processing, phosphorylation on Ser-1262 is required for interaction with BRCA1. Phosphorylation at Ser-79 by AMPK inactivates enzyme activity. Post-translationally, the biotin cofactor is covalently attached to the central biotinyl-binding domain and is required for the catalytic activity.

Its subcellular location is the cytoplasm. It localises to the cytosol. The catalysed reaction is hydrogencarbonate + acetyl-CoA + ATP = malonyl-CoA + ADP + phosphate + H(+). Its pathway is lipid metabolism; malonyl-CoA biosynthesis; malonyl-CoA from acetyl-CoA: step 1/1. With respect to regulation, inhibited by phosphorylation. Citrate promotes oligomerization of the protein into filaments that correspond to the most active form of the carboxylase. Cytosolic enzyme that catalyzes the carboxylation of acetyl-CoA to malonyl-CoA, the first and rate-limiting step of de novo fatty acid biosynthesis. This is a 2 steps reaction starting with the ATP-dependent carboxylation of the biotin carried by the biotin carboxyl carrier (BCC) domain followed by the transfer of the carboxyl group from carboxylated biotin to acetyl-CoA. The protein is Acetyl-CoA carboxylase 1 of Mus musculus (Mouse).